A 473-amino-acid chain; its full sequence is H(+)/Cl(-) exchange transporter ClcA (473 aa).

Residues 1 to 32 (MKTDTPSLETPQAARLRRRQLIRQLLERDKTP) lie on the Cytoplasmic side of the membrane. The chain crosses the membrane as a helical span at residues 33–69 (LAILFMAAVVGTLVGLAAVAFDKGVAWLQNQRMGALV). At 70–76 (HTADNYP) the chain is on the periplasmic side. A helical transmembrane segment spans residues 77–100 (LLLTVAFLCSAVLAMFGYFLVRKY). A Selectivity filter part_1 motif is present at residues 106–110 (GSGIP). Chloride is bound at residue Ser107. An intramembrane region (helical) is located at residues 109–116 (IPEIEGAL). Residues 117–123 (EDQRPVR) are Cytoplasmic-facing. The next 2 membrane-spanning stretches (helical) occupy residues 124-141 (WWRV…TLGG) and 148-166 (EGPT…LDIF). The short motif at 146 to 150 (GREGP) is the Selectivity filter part_2 element. The Cytoplasmic segment spans residues 167 to 176 (RLKGDEARHT). 2 intramembrane regions (helical) span residues 177–189 (LLAT…LAAA) and 193–201 (PLAGILFII). Over 202–214 (EEMRPQFRYTLIS) the chain is Cytoplasmic. Residues 215–232 (IKAVFIGVIMSTIMYRIF) form a helical membrane-spanning segment. Topologically, residues 233 to 252 (NHEVALIDVGKLSDAPLNTQ) are periplasmic. The chain crosses the membrane as a helical span at residues 253–281 (WLYLILGIIFGIFGPIFNKWVLGMQDLLH). The Cytoplasmic portion of the chain corresponds to 282–287 (RVHGGN). Residues 288–309 (ITKWVLMGGAIGGLCGLLGFVA) traverse the membrane as a helical segment. Residues 310–329 (PATSGGGFNLIPIATAGNFS) are Periplasmic-facing. A run of 2 helical transmembrane segments spans residues 330 to 349 (MGML…LCFS) and 355 to 376 (GIFA…MVVV). Residues 355 to 359 (GIFAP) carry the Selectivity filter part_3 motif. Chloride is bound by residues Ile356 and Phe357. Topologically, residues 377 to 386 (ELFPQYHLEA) are periplasmic. Positions 387–401 (GTFAIAGMGALLAAS) form an intramembrane region, helical. Positions 402–404 (IRA) form an intramembrane region, note=Loop between two helices. Positions 405-416 (PLTGIILVLEMT) form an intramembrane region, helical. An intramembrane region (note=Loop between two helices) is located at residues 417–421 (DNYQL). A helical transmembrane segment spans residues 422–438 (ILPMIITGLGATLLAQF). Residues 439 to 473 (TGGKPLYSAILARTLAKQEAEQLARSKAASASENT) are Cytoplasmic-facing. Tyr445 contacts chloride.

The protein belongs to the chloride channel (TC 2.A.49) family. ClcA subfamily. In terms of assembly, homodimer.

It is found in the cell inner membrane. It catalyses the reaction 2 chloride(in) + H(+)(out) = 2 chloride(out) + H(+)(in). Functionally, proton-coupled chloride transporter. Functions as antiport system and exchanges two chloride ions for 1 proton. Probably acts as an electrical shunt for an outwardly-directed proton pump that is linked to amino acid decarboxylation, as part of the extreme acid resistance (XAR) response. This chain is H(+)/Cl(-) exchange transporter ClcA, found in Shigella boydii serotype 18 (strain CDC 3083-94 / BS512).